The following is a 781-amino-acid chain: Putative amine oxidase [copper-containing] (781 aa).

A signal peptide spans Met1–Ala34. Cys199 and Cys203 form a disulfide bridge. Phe385–Asn395 is a binding site for substrate. The active-site Proton acceptor is Asp387. Cys405 and Cys432 form a disulfide bridge. Position 472 to 477 (Ile472 to Tyr477) interacts with substrate. Catalysis depends on Tyr475, which acts as the Schiff-base intermediate with substrate; via topaquinone. Tyr475 carries the 2',4',5'-topaquinone modification. Cu cation is bound by residues His525 and His527. Asp534, Asp536, Glu579, Phe671, Asp674, Glu676, Asp682, and Leu683 together coordinate Ca(2+). Asp534 and Asp536 together coordinate Mn(2+). Mn(2+) is bound at residue Asp682. His693 serves as a coordination point for Cu cation.

Belongs to the copper/topaquinone oxidase family. In terms of assembly, homodimer. It depends on Cu cation as a cofactor. Requires Ca(2+) as cofactor. L-topaquinone is required as a cofactor. The cofactor is Mn(2+). Topaquinone (TPQ) is generated by copper-dependent autoxidation of a specific tyrosyl residue. Prismatic layer of shell (at protein level). Expressed primarily in the mantle with highest level in the mantle edge and lower level in the mantle pallium.

Its subcellular location is the secreted. The chain is Putative amine oxidase [copper-containing] from Margaritifera margaritifera (Freshwater pearl mussel).